A 91-amino-acid chain; its full sequence is UPF0250 protein PP_4802 (91 aa).

Belongs to the UPF0250 family.

The chain is UPF0250 protein PP_4802 from Pseudomonas putida (strain ATCC 47054 / DSM 6125 / CFBP 8728 / NCIMB 11950 / KT2440).